A 197-amino-acid chain; its full sequence is TLE family member 5 (197 aa).

The CCN domain stretch occupies residues 166 to 197 (LSALGSQTHLSKEDKNGHDGDTHQEDDGEKSD). Positions 170 to 197 (GSQTHLSKEDKNGHDGDTHQEDDGEKSD) are disordered. The segment covering 175–197 (LSKEDKNGHDGDTHQEDDGEKSD) has biased composition (basic and acidic residues). S196 carries the phosphoserine modification.

Belongs to the WD repeat Groucho/TLE family. Homooligomer and heterooligomer with other family members. Binds TCF7 and the NF-kappa-B subunit RELA. Interacts with PHF12. Interacts (via Q domain) with SIX3. Interacts with SIX6. In terms of processing, ubiquitinated by XIAP/BIRC4. As to expression, ubiquitously expressed in developing embryos by midgestation, a wide expression is conserved in adult. In mouse, abundantly expressed in muscle, heart and brain.

It localises to the nucleus. Its function is as follows. Transcriptional corepressor. Acts as a dominant repressor towards other family members. Inhibits NF-kappa-B-regulated gene expression. May be required for the initiation and maintenance of the differentiated state. Essential for the transcriptional repressor activity of SIX3 during retina and lens development. The chain is TLE family member 5 from Mus musculus (Mouse).